The primary structure comprises 111 residues: UPF0060 membrane protein CPR_1507 (111 aa).

4 consecutive transmembrane segments (helical) span residues Ile-7–Trp-27, Ser-33–Leu-53, Phe-60–Trp-80, and Ile-85–Ile-105.

Belongs to the UPF0060 family.

Its subcellular location is the cell membrane. In Clostridium perfringens (strain SM101 / Type A), this protein is UPF0060 membrane protein CPR_1507.